The primary structure comprises 421 residues: 4-aminobutyrate aminotransferase PuuE (421 aa).

Pyridoxal 5'-phosphate contacts are provided by residues 110–111 and 238–241; these read GA and DEVQ. Residue lysine 267 is modified to N6-(pyridoxal phosphate)lysine. Threonine 296 contacts pyridoxal 5'-phosphate.

Belongs to the class-III pyridoxal-phosphate-dependent aminotransferase family. The cofactor is pyridoxal 5'-phosphate.

It catalyses the reaction 4-aminobutanoate + 2-oxoglutarate = succinate semialdehyde + L-glutamate. The protein operates within amine and polyamine degradation; putrescine degradation; succinate semialdehyde from 4-aminobutanoate. Completely inhibited by succinate and low-aeration conditions. In terms of biological role, catalyzes the transfer of the amino group from gamma-aminobutyrate (GABA) to alpha-ketoglutarate (KG) to yield succinic semialdehyde (SSA). PuuE is important for utilization of putrescine as the sole nitrogen or carbon source. This chain is 4-aminobutyrate aminotransferase PuuE (puuE), found in Escherichia coli (strain K12).